A 116-amino-acid polypeptide reads, in one-letter code: Somatostatin (116 aa).

Positions 1 to 24 (MLSCRLQCALALLSIALAVGTVSA) are cleaved as a signal peptide. The propeptide occupies 25–88 (APSDPRLRQF…QDEVRLELER (64 aa)). A disordered region spans residues 60 to 82 (PSQTENEALESEDLSRGAEQDEV). Residues 72–82 (DLSRGAEQDEV) are compositionally biased toward basic and acidic residues. Residues Cys105 and Cys116 are joined by a disulfide bond.

This sequence belongs to the somatostatin family.

The protein localises to the secreted. Somatostatin inhibits the release of somatotropin. The polypeptide is Somatostatin (SST) (Gallus gallus (Chicken)).